The chain runs to 196 residues: Glycerol-3-phosphate acyltransferase (196 aa).

The next 5 helical transmembrane spans lie at 4–24 (FYIMLLAAYLIGAIPTGVVLT), 53–73 (LGVLTLIGDALKGAVPVLIAI), 78–98 (LGDAQVGAVAAAAFIGHCYPV), 114–134 (IFLVLSPLAVLGAFAVFALLV), and 140–160 (VSLGSICAAAAIPILVYFTEG).

It belongs to the PlsY family. In terms of assembly, probably interacts with PlsX.

It is found in the cell inner membrane. It carries out the reaction an acyl phosphate + sn-glycerol 3-phosphate = a 1-acyl-sn-glycero-3-phosphate + phosphate. Its pathway is lipid metabolism; phospholipid metabolism. In terms of biological role, catalyzes the transfer of an acyl group from acyl-phosphate (acyl-PO(4)) to glycerol-3-phosphate (G3P) to form lysophosphatidic acid (LPA). This enzyme utilizes acyl-phosphate as fatty acyl donor, but not acyl-CoA or acyl-ACP. In Syntrophotalea carbinolica (strain DSM 2380 / NBRC 103641 / GraBd1) (Pelobacter carbinolicus), this protein is Glycerol-3-phosphate acyltransferase.